A 78-amino-acid polypeptide reads, in one-letter code: Large ribosomal subunit protein bL28 (78 aa).

The protein belongs to the bacterial ribosomal protein bL28 family.

The chain is Large ribosomal subunit protein bL28 from Pseudoalteromonas atlantica (strain T6c / ATCC BAA-1087).